The chain runs to 121 residues: Chromosome transmission fidelity protein 8 homolog (121 aa).

Belongs to the CTF8 family. As to quaternary structure, component of the CTF18-RFC complex, which consists of CTF18, CTF8, DSCC1, RFC2, RFC3, RFC4 and RFC5. The CTF18-RFC complex does not interact with the Rad9/Rad1/Hus1 complex. The CTF18-RFC complex interacts with POLH. CTF18/CTF8/DSCC1 associate with PCNA. CTF8 exists as a dimer with DSCC1.

The protein resides in the nucleus. Chromosome cohesion factor involved in sister chromatid cohesion and fidelity of chromosome transmission. Component of one of the cell nuclear antigen loader complexes, CTF18-replication factor C (CTF18-RFC), which consists of CTF18, CTF8, DSCC1, RFC2, RFC3, RFC4 and RFC5. The CTF18-RFC complex binds to single-stranded and primed DNAs and has weak ATPase activity that is stimulated the presence of primed DNA, replication protein A (RPA) and proliferating cell nuclear antigen (PCNA). The CTF18-RFC complex catalyzes the ATP-dependent loading of PCNA onto primed and gapped DNA. It also interacts with and stimulates POLH, which is suggestive of a protein network that coordinates DNA repair, recombination and chromosome cohesion reactions with replication fork progression. In Homo sapiens (Human), this protein is Chromosome transmission fidelity protein 8 homolog.